A 196-amino-acid chain; its full sequence is ATP-dependent Clp protease proteolytic subunit (196 aa).

Residue serine 96 is the Nucleophile of the active site. Histidine 121 is a catalytic residue.

It belongs to the peptidase S14 family. In terms of assembly, fourteen ClpP subunits assemble into 2 heptameric rings which stack back to back to give a disk-like structure with a central cavity, resembling the structure of eukaryotic proteasomes.

The protein resides in the cytoplasm. It carries out the reaction Hydrolysis of proteins to small peptides in the presence of ATP and magnesium. alpha-casein is the usual test substrate. In the absence of ATP, only oligopeptides shorter than five residues are hydrolyzed (such as succinyl-Leu-Tyr-|-NHMec, and Leu-Tyr-Leu-|-Tyr-Trp, in which cleavage of the -Tyr-|-Leu- and -Tyr-|-Trp bonds also occurs).. Its function is as follows. Cleaves peptides in various proteins in a process that requires ATP hydrolysis. Has a chymotrypsin-like activity. Plays a major role in the degradation of misfolded proteins. The chain is ATP-dependent Clp protease proteolytic subunit from Streptococcus sanguinis (strain SK36).